Here is a 173-residue protein sequence, read N- to C-terminus: Alpha-crystallin A chain (173 aa).

An N-acetylmethionine modification is found at M1. The tract at residues 1 to 63 (MDVTIQHPWF…RTVLDSGISE (63 aa)) is required for complex formation with BFSP1 and BFSP2. Q6 is subject to Deamidated glutamine; partial. At S45 the chain carries Phosphoserine. Position 50 is a deamidated glutamine; partial (Q50). The sHSP domain maps to 52–162 (LFRTVLDSGI…GHSERAIPVS (111 aa)). N6-acetyllysine occurs at positions 70 and 99. Position 100 (H100) interacts with Zn(2+). Residue N101 is modified to Deamidated asparagine; partial. The Zn(2+) site is built by E102 and H107. S122 is modified (phosphoserine). N123 is subject to Deamidated asparagine; partial. The tract at residues 145–173 (KVQSGLDAGHSERAIPVSREEKPSSAPSS) is disordered. At Q147 the chain carries Deamidated glutamine; partial. A compositionally biased stretch (basic and acidic residues) spans 153-167 (GHSERAIPVSREEKP). H154 contacts Zn(2+). S162 carries an O-linked (GlcNAc) serine glycan.

This sequence belongs to the small heat shock protein (HSP20) family. As to quaternary structure, heteromer composed of three CRYAA and one CRYAB subunits. Inter-subunit bridging via zinc ions enhances stability, which is crucial as there is no protein turn over in the lens. Can also form homodimers and homotetramers (dimers of dimers) which serve as the building blocks of homooligomers. Within homooligomers, the zinc-binding motif is created from residues of 3 different molecules. His-100 and Glu-102 from one molecule are ligands of the zinc ion, and His-107 and His-154 residues from additional molecules complete the site with tetrahedral coordination geometry. Part of a complex required for lens intermediate filament formation composed of BFSP1, BFSP2 and CRYAA. Post-translationally, acetylation at Lys-70 may increase chaperone activity. Undergoes age-dependent proteolytical cleavage at the C-terminus.

The protein resides in the cytoplasm. The protein localises to the nucleus. Contributes to the transparency and refractive index of the lens. Acts as a chaperone, preventing aggregation of various proteins under a wide range of stress conditions. Required for the correct formation of lens intermediate filaments as part of a complex composed of BFSP1, BFSP2 and CRYAA. The protein is Alpha-crystallin A chain (CRYAA) of Meriones unguiculatus (Mongolian jird).